The sequence spans 306 residues: tRNA dimethylallyltransferase (306 aa).

9-16 (GPTGIGKT) contacts ATP. Residue 11-16 (TGIGKT) coordinates substrate. Residues 34–37 (DSMQ) are interaction with substrate tRNA.

Belongs to the IPP transferase family. Monomer. The cofactor is Mg(2+).

The enzyme catalyses adenosine(37) in tRNA + dimethylallyl diphosphate = N(6)-dimethylallyladenosine(37) in tRNA + diphosphate. Catalyzes the transfer of a dimethylallyl group onto the adenine at position 37 in tRNAs that read codons beginning with uridine, leading to the formation of N6-(dimethylallyl)adenosine (i(6)A). The protein is tRNA dimethylallyltransferase of Lactobacillus johnsonii (strain CNCM I-12250 / La1 / NCC 533).